The chain runs to 156 residues: Small ribosomal subunit protein uS7 (156 aa).

This sequence belongs to the universal ribosomal protein uS7 family. Part of the 30S ribosomal subunit. Contacts proteins S9 and S11.

Its function is as follows. One of the primary rRNA binding proteins, it binds directly to 16S rRNA where it nucleates assembly of the head domain of the 30S subunit. Is located at the subunit interface close to the decoding center, probably blocks exit of the E-site tRNA. The sequence is that of Small ribosomal subunit protein uS7 from Prochlorococcus marinus (strain MIT 9303).